The sequence spans 1195 residues: MVYIKQIELSHFKSFGGTTSLPLLPEFTVVTGPNGSGKSNILDALLFALGLSSSKGMRADRLPDLVNSTYASRSRSTVETLVTVTFALDDWQPEAEETEEGEGTGLQPGMAEWTVSRKLRVTPSGTYTSTYAMNGEACTLQQLHEQLSRLRIYPEGYNVVLQGDVTNIISMSPRDRRQIIDELAGVAQFDRKIEQAKGKLEAVKEREDRCRIVEQELIEQRDRLAKDREKAQKYQALRQEQATKQSWEAVLRWRAGQRQVQALQRSLAQLATDAATDQQTQQTLEQQIQQTEATLDRLNQRVKALGEEELLKLQAALAQQEAEQRQSQRQQQELVESQTQTQQQIQALLQTQAQLQTEGQQQAEQARTLQTTIAQTLQPQYQQALEQVEAARQSAHALAAQSQDWVTRQTSLRQQADAIAAQVEPQRAEQAQLQERQTQLQQQLEATQSALVTVTAELETETEQAEGDRAALSQAEAAVVTAADQLVRLEEELQIQQETRDRLLKEQRDKQRQLDRQESLRQAMQETQGTAAARLILDTGLPGVHGLVAQLGRVEPRYQLALEVAAGGRLGYLVVDDDGVASAGIELLKQKKAGRITFLPLNRIRAGKQPEIPRWQQPEGLVDLAIALVDCDDRYREVFKFVLGGTVVFERLDQARRYMGQYRIVTLDGELLETSGAMTGGSIARRSGGLSFGSPDSGESAEVRAIRDRLEQLEVILDRSELQILNLQAAIKDAASTLSDRRQQQREQQLTVQQRQQTLQRLQQQQQQLNAELQQRQQQASQAQARLAALALELPAALKQLKTLRQALAELEDSPIHGEWQQRQTLLQQQEALLQQQETALRQAEQQLQQLQTDQKRLQERAIAARTQVSQLRQQQGEQLNRLAQLDEQQRQQATAIAQLQQRQAQLEAQLGQEKVDRDRTERQLQEQRSQRQNLVWQQEKRQQQQQELQQQLTDLEVQLQAEQQELPQPLPDIPEMVQQQGIEALQHELRSLAKRIQAMEPVNMLALEEYERTQARLEELSEKLTTIEAERTELLLRIENFTTLRRRAFMESFEAIDRNFQEIFAHLSDGDGSLQLDNPEDPFSSGLNLIAHPKGKPVRRLASMSGGEKSLTALSFIFALQRYRPSPFYALDEVDSFLDGANVERLARVIRQQAQAAQFIVVSHRRPMIEAAERTIGVTQARGAHTQVLGIPQP.

P33 to N40 provides a ligand contact to ATP. Coiled coils occupy residues G185 to Q241, D273 to L348, and Q380 to Q528. The region spanning P542–Y658 is the SMC hinge domain. The stretch at G698–T1043 forms a coiled coil.

It belongs to the SMC family. In terms of assembly, homodimer.

Its subcellular location is the cytoplasm. Functionally, required for chromosome condensation and partitioning. This chain is Chromosome partition protein Smc, found in Synechococcus sp. (strain ATCC 27144 / PCC 6301 / SAUG 1402/1) (Anacystis nidulans).